A 46-amino-acid chain; its full sequence is Sperm protamine P1 (46 aa).

This sequence belongs to the protamine P1 family. Testis.

It is found in the nucleus. The protein localises to the chromosome. In terms of biological role, protamines substitute for histones in the chromatin of sperm during the haploid phase of spermatogenesis. They compact sperm DNA into a highly condensed, stable and inactive complex. The chain is Sperm protamine P1 (PRM1) from Hypsugo savii (Savi's pipistrelle).